Reading from the N-terminus, the 455-residue chain is Keratin, type I cuticular Ha5 (455 aa).

The head stretch occupies residues 1-97 (MASKCLKAGF…FGEGILTGNE (97 aa)). In terms of domain architecture, IF rod spans 97 to 408 (EKETMQSLND…GLLESEDSKL (312 aa)). Positions 98-132 (KETMQSLNDRLAGYLEKVRQLEQENASLESRIREW) are coil 1A. The tract at residues 133–143 (CEQQVPYMCPD) is linker 1. Positions 144–244 (YQSYFRTIEE…HEEEVNSLRC (101 aa)) are coil 1B. Residues 245–260 (QLGDRLNVEVDAAPPV) form a linker 12 region. The segment at 261 to 404 (DLNRVLEEMR…NTYRGLLESE (144 aa)) is coil 2. A tail region spans residues 405–455 (DSKLPCNPCAPDYSPSKSCLPCLPAASCGPSAARTNCSPRPICVPCPGGRF).

The protein belongs to the intermediate filament family. As to expression, early expression in the hair follicle, mainly found in supramatricial cells and lowermost cortical cells of the hair bulb.

The protein is Keratin, type I cuticular Ha5 (KRT35) of Homo sapiens (Human).